We begin with the raw amino-acid sequence, 2225 residues long: MDSTQITESNRECSVLQGKLATETVRESLSSSPSPLPSLASPVSSGSEPPAFGETQPQSRDSTLLFNAQVPEFWETCVHDVIQERCKEAPQSTAVAAWDGSFTYGELDDLSNRLASALTLLGVKAETFVPICMEKSRWATVAVLGVMKAGGAFTLLDASYPLPRLKTICQELSSLVVLSSTAQSERCTQLANMIVVEHLCRAWHPVAHTTQSPATVCPSNALYVSFTSGSTGRPKGVLIEHRAYSSGAREHLKAFRIDQTSRVLQFSSYAFDVSIMETLSTLMAGGCLCVLGDAQRSDVCLFAAAVDEFQVSHALLTPSFARTVPWENVRHLQTLVLGGEEMRVSDAAMCVERGVRLINAYGTAECSVNATARPGVQPGDNLSTIGHPTGAVAWLIDPDDPETPIGPGMEGELLLEGPIVGRGYLNNPAATAAAFIGPPKWLQQLRKTDYQHQLYRTGDLAVQDSTGALMLLGRRDGQLKIRGQRVEVAEIEQHIDRVLAAVKEVIVEKVTPECEQREILMAFVQTGATSQAWTEGSPLFLPPGPTSVQEFRTAQSQLRGQLPSYMVPTIFIGVAAVPRTASGKMDRRLLRVTAGRLSREELQAFTGSPVDSRSPTTATELMLQRLYAEVLELPTTSISMEDSFVRLGGDSIMAVRLLGAARRAGLVLDIGDVLGTARLEEQAQRATPMTEGTACETYIPFSALGSRYMNREEVLRLAAEQCGTSLSEIEDIYPCTPLQEGMLALASSQTWMYVGHIVFGLPEGVDVSRFKAAWQSTADTTPILRTRIIETPQGLLQVVLRGSLVWETYNEPPDACVADGGSQIGSPGAPLMRFALGDGDHRDEFVLTVHHAVWDAWSMRLIHDAVERSFQGEQVKKQPFHPFIQHLQQVDGGMDEFWRTELANLEAVPFPALPSTHYRPSPTAMLRHTVEKIEICAPRSHTMASYIHLAWSLLVAHYTDSTEAVYGATMSGRNAPVEAINELAGPTIATVPVRVHVRPEDTISAALEQIQSCMVRMVPHEQAGLLRIAKTSSDAARACAFQSHLNIQVVEPERRLFPVRRGIASTGMDLTRFSSYALNLMLLLSPDNTSVIVNIAYDPQVLSAWEVYRMIHQWEHILRQVCREPTGSLQELDLASPLDQDLLRVWNAKTPAVDRRCLHDLVLAQAMQQPSRQAVSAWDGGFTYGELAHLSSNFARLLSLFAVGRGSFVPICMDKSRWAVVSILAVLQAGATCVLLDPQYPRQRMKDIITGLSVPVLVNAPSTAPVTRGLSAIQLCVSAKFTEQLWTSNPSGSHFQAHVDPDDLAFVIFTSGSTGAPKGIAMPHSTISSSIRHNSAAMRFDADTRTLHFSSYAFDVSIYEIFTTLASGGCVCVPSEFQRTNELADFIQQWRVNWAFLTPSTAQSLHPSEVPGLATLVLGGEAVTPDHVEVWAPGRTLINGYGPAEATICAVGPLPEHGWVPGKIGHVVGGVGWVTVPSDPNRLAAIGAIGELLLEGPFLARGYLNQHEATAASFITPPPWRRKLLPGCDADTTRLYRTGDLVRYQEDGSLRYIGRRDTQVKVRGQRIDLGEIETQLHRSFPGAHDVVAETVQLPVLQDRTVLVAFIGRQEGLVMESALGEEVVAAVDAGFQQAVSSAQARLQDILPSYMLPSVFLPLAHCPKTLTGKTDRRYLRQVVLGLEPHELQRYRVASRQKTRIPVSHGAELRLQSIWADLLHIPCDEIGAEDTFLLHGGDSVAAMRMVALARRADFTFRVTDVLNNCTLSDLARCTGEEQCLAAETLPTVHDVESDDQVVASQTDSDAIAVYPTTQAQSFLIQRYPWTHWRFAFHGEVSIDRLRTACARLVAAHSILRTLFVGGKGQRDRQVVMKALDIPLHTVTTNKSLEEYCQSICDAEQQMDVVETVLPTRLTLVSDVLHTAHIFVLRLSHAQYDGICVPKIFAGLESFYNRTETVAPTIFERYLDQRQRFEGEGPHEFWRAYLAGSSPPCTMPGKSTPPTTADSGPVAPPSVISASQTVKFTAIPSQVTLATVVKAAACLVLARLTGRSDITVGQTVNGRSLPLPWVNEVVGPCVNYIPFRATLQQSMSTQDYLVDMQRQHNRCVPFDGAELDTIVKNCTDWEPTAEFGFILQHQNIDMDLSLTLDGNRCVSCASSGQLRPSNEVWICSTPSPSGVDLDVVASSHILTADAAKNLVDDIADMIQTLLYNLETPLRDAVELNWSDGS.

Residues 24 to 59 (TVRESLSSSPSPLPSLASPVSSGSEPPAFGETQPQS) form a disordered region. Positions 28 to 49 (SLSSSPSPLPSLASPVSSGSEP) are enriched in low complexity. An adenylation 1 region spans residues 83 to 482 (QERCKEAPQS…GRRDGQLKIR (400 aa)). The 77-residue stretch at 614–690 (SPTTATELML…EQAQRATPMT (77 aa)) folds into the Carrier 1 domain. S651 is subject to O-(pantetheine 4'-phosphoryl)serine. The condensation 1 stretch occupies residues 730-1142 (EDIYPCTPLQ…DLASPLDQDL (413 aa)). Residues 1164 to 1563 (AQAMQQPSRQ…GRRDTQVKVR (400 aa)) form an adenylation 2 region. The 77-residue stretch at 1699 to 1775 (PVSHGAELRL…DLARCTGEEQ (77 aa)) folds into the Carrier 2 domain. Position 1736 is an O-(pantetheine 4'-phosphoryl)serine (S1736). Positions 1827–2138 (FAFHGEVSID…FILQHQNIDM (312 aa)) are condensation 2.

Belongs to the NRP synthetase family.

It catalyses the reaction L-proline + L-tryptophan + 2 ATP = brevianamide F + 2 AMP + 2 diphosphate + 2 H(+). Its pathway is alkaloid biosynthesis. Functionally, nonribisomal peptide synthetase; part of the gene cluster that mediates the biosynthesis of notoamide, a fungal indole alkaloid that belongs to a family of natural products containing a characteristic bicyclo[2.2.2]diazaoctane core. The first step of notoamide biosynthesis involves coupling of L-proline and L-tryptophan by the bimodular NRPS notE', to produce cyclo-L-tryptophan-L-proline called brevianamide F. The reverse prenyltransferase notF' then acts as a deoxybrevianamide E synthase and converts brevianamide F to deoxybrevianamide E via reverse prenylation at C-2 of the indole ring leading to the bicyclo[2.2.2]diazaoctane core. Deoxybrevianamide E is further hydroxylated at C-6 of the indole ring, likely catalyzed by the cytochrome P450 monooxygenase notG', to yield 6-hydroxy-deoxybrevianamide E. 6-hydroxy-deoxybrevianamide E is a specific substrate of the prenyltransferase notC' for normal prenylation at C-7 to produce 6-hydroxy-7-prenyl-deoxybrevianamide, also called notoamide S. As the proposed pivotal branching point in notoamide biosynthesis, notoamide S can be diverted to notoamide E through an oxidative pyran ring closure putatively catalyzed by either notH' cytochrome P450 monooxygenase or the notD' FAD-linked oxidoreductase. This step would be followed by an indole 2,3-epoxidation-initiated pinacol-like rearrangement catalyzed by the notB' FAD-dependent monooxygenase leading to the formation of notoamide C and notoamide D. On the other hand notoamide S is converted to notoamide T by notH' (or notD'), a bifunctional oxidase that also functions as the intramolecular Diels-Alderase responsible for generation of (-)-notoamide T. To generate antipodal (+)-notoaminide T, notH (or notD) in Aspergillus strain MF297-2 is expected to catalyze a Diels-Alder reaction leading to the opposite stereochemistry. The remaining oxidoreductase notD' (or notH') likely catalyzes the oxidative pyran ring formation to yield (-)-stephacidin A. The FAD-dependent monooxygenase notI' is highly similar to notB' and is predicted to catalyze a similar conversion from (-)-stephacidin A to (+)-notoamide B via the 2,3-epoxidation of (-)-stephacidin A followed by a pinacol-type rearrangement. Finally, it remains unclear which enzyme could be responsible for the final hydroxylation steps leading to notoamide A and sclerotiamide. The sequence is that of Nonribisomal peptide synthetase notE' from Aspergillus versicolor.